A 345-amino-acid chain; its full sequence is D-alanine--D-alanine ligase (345 aa).

An ATP-grasp domain is found at 133-332 (KWLCHARGVK…LPHTKRAKVT (200 aa)). Residue 160–211 (AYPIIVKPSRLGSSIGVSIVKDESKLDYALDSAFEFDNTVIVEPFLEGVKEY) participates in ATP binding. Positions 284, 296, and 298 each coordinate Mg(2+).

Belongs to the D-alanine--D-alanine ligase family. Mg(2+) serves as cofactor. Mn(2+) is required as a cofactor.

It is found in the cytoplasm. The catalysed reaction is 2 D-alanine + ATP = D-alanyl-D-alanine + ADP + phosphate + H(+). It participates in cell wall biogenesis; peptidoglycan biosynthesis. Its function is as follows. Cell wall formation. The chain is D-alanine--D-alanine ligase from Sulfurimonas denitrificans (strain ATCC 33889 / DSM 1251) (Thiomicrospira denitrificans (strain ATCC 33889 / DSM 1251)).